Here is a 264-residue protein sequence, read N- to C-terminus: Apolipoprotein A-I (264 aa).

A signal peptide spans 1-18 (MKAVVLAVAVLFLTGSQA). A run of 2 repeats spans residues 67 to 88 (LNLL…EQLG) and 89 to 110 (SVTK…QQMN). Residues 67 to 264 (LNLLANWNTL…DQASKQLSAQ (198 aa)) are 10 X approximate tandem repeats. M109 carries the post-translational modification Methionine sulfoxide. A 3; half-length repeat occupies 111 to 121 (KDLEEVKQKVQ). 5 repeat units span residues 122 to 142 (SYLD…RDKV), 144 to 165 (PLGK…EKLA), 166 to 187 (PLGQ…THLG), 188 to 208 (SYTQ…KESA), and 209 to 229 (PVSE…EKAK). Methionine sulfoxide is present on M193. The 9; half-length repeat unit spans residues 230 to 240 (PALEDLRQGLM). Position 240 is a methionine sulfoxide (M240). Repeat 10 spans residues 241-264 (PVMESLKASFLSSIDQASKQLSAQ).

The protein belongs to the apolipoprotein A1/A4/E family. As to quaternary structure, homodimer. Interacts with APOA1BP and CLU. Component of a sperm activating protein complex (SPAP), consisting of APOA1, an immunoglobulin heavy chain, an immunoglobulin light chain and albumin. Interacts with NDRG1. Interacts with SCGB3A2. Interacts with NAXE and YJEFN3. Glycosylated. Post-translationally, palmitoylated. In terms of processing, phosphorylation sites are present in the extracellular medium. Major protein of plasma HDL, also found in chylomicrons.

Its subcellular location is the secreted. In terms of biological role, participates in the reverse transport of cholesterol from tissues to the liver for excretion by promoting cholesterol efflux from tissues and by acting as a cofactor for the lecithin cholesterol acyltransferase (LCAT). As part of the SPAP complex, activates spermatozoa motility. This Heterocephalus glaber (Naked mole rat) protein is Apolipoprotein A-I (Apoa1).